A 618-amino-acid chain; its full sequence is Glutathione-regulated potassium-efflux system protein (618 aa).

12 helical membrane-spanning segments follow: residues 6-26, 32-52, 55-75, 94-114, 118-138, 152-172, 186-206, 227-247, 274-294, 298-318, 336-356, and 362-382; these read NPELMKVVILLASSVTIVPLF, GSVLGYLVAGCLIGPSVFGIV, PTAVVHLAELGVVMFLFIIGL, LLQVGLCGCLLTFSGIYLLGL, VSFIAGMGFTLSSTAIVMQSL, VISTLIFEDIAIVPLLASVAF, WVSIGIALSAVVGLIVTGKWL, ALLVVLGAALAMEIGGLSMAM, GLLLGLFFMGVGMSLDLHLVF, ILLLGIVFLYILGKASAVYII, MAHGGEFAFVLFSAAATAEVI, and ATFTAAVIISMLFSPIIAQIA. The 117-residue stretch at 409–525 folds into the RCK N-terminal domain; the sequence is EDNVLVIGFG…LIKQDVDFIV (117 aa).

This sequence belongs to the monovalent cation:proton antiporter 2 (CPA2) transporter (TC 2.A.37) family.

Its subcellular location is the cell inner membrane. Its function is as follows. Transport system that facilitate potassium-efflux, possibly by potassium-proton antiport. The protein is Glutathione-regulated potassium-efflux system protein (kefBC) of Haemophilus influenzae (strain ATCC 51907 / DSM 11121 / KW20 / Rd).